The chain runs to 145 residues: Secreted RxLR effector protein 100 (145 aa).

The first 19 residues, 1–19, serve as a signal peptide directing secretion; sequence MRYLLLTFFTFHCQMVADA. The short motif at 27–30 is the RxLR element; the sequence is RLLR. The tract at residues 38-77 is disordered; sequence SGEGKIEEAGMIVTTGAPTPENETMEHNEVPQSTTDTDQK. A glycan (N-linked (GlcNAc...) asparagine) is linked at Asn-59.

Belongs to the RxLR effector family.

Its subcellular location is the secreted. The protein resides in the host nucleus. In terms of biological role, secreted effector that dos not suppress the host cell death induced by cell death-inducing proteins. This chain is Secreted RxLR effector protein 100, found in Plasmopara viticola (Downy mildew of grapevine).